The sequence spans 405 residues: Argininosuccinate synthase (405 aa).

ATP is bound by residues 11 to 19 (AYSGGLDTS) and alanine 38. 2 residues coordinate L-citrulline: tyrosine 91 and serine 96. Position 121 (glycine 121) interacts with ATP. 3 residues coordinate L-aspartate: threonine 123, asparagine 127, and aspartate 128. Asparagine 127 contributes to the L-citrulline binding site. L-citrulline contacts are provided by arginine 131, serine 182, serine 191, glutamate 267, and tyrosine 279.

This sequence belongs to the argininosuccinate synthase family. Type 1 subfamily. Homotetramer.

The protein localises to the cytoplasm. The catalysed reaction is L-citrulline + L-aspartate + ATP = 2-(N(omega)-L-arginino)succinate + AMP + diphosphate + H(+). It participates in amino-acid biosynthesis; L-arginine biosynthesis; L-arginine from L-ornithine and carbamoyl phosphate: step 2/3. The protein is Argininosuccinate synthase of Sphingopyxis alaskensis (strain DSM 13593 / LMG 18877 / RB2256) (Sphingomonas alaskensis).